Consider the following 212-residue polypeptide: Deoxyribose-phosphate aldolase (212 aa).

Asp89 (proton donor/acceptor) is an active-site residue. Lys151 functions as the Schiff-base intermediate with acetaldehyde in the catalytic mechanism. The active-site Proton donor/acceptor is the Lys180.

It belongs to the DeoC/FbaB aldolase family. DeoC type 1 subfamily.

It localises to the cytoplasm. It carries out the reaction 2-deoxy-D-ribose 5-phosphate = D-glyceraldehyde 3-phosphate + acetaldehyde. It functions in the pathway carbohydrate degradation; 2-deoxy-D-ribose 1-phosphate degradation; D-glyceraldehyde 3-phosphate and acetaldehyde from 2-deoxy-alpha-D-ribose 1-phosphate: step 2/2. In terms of biological role, catalyzes a reversible aldol reaction between acetaldehyde and D-glyceraldehyde 3-phosphate to generate 2-deoxy-D-ribose 5-phosphate. In Clostridium botulinum (strain Loch Maree / Type A3), this protein is Deoxyribose-phosphate aldolase.